The sequence spans 186 residues: GMP synthase [glutamine-hydrolyzing] subunit A (186 aa).

Positions 2-186 (SIVIINNFGQ…ENFNKICENY (185 aa)) constitute a Glutamine amidotransferase type-1 domain. The active-site Nucleophile is Cys76. Active-site residues include His163 and Glu165.

Heterodimer composed of a glutamine amidotransferase subunit (A) and a GMP-binding subunit (B).

It catalyses the reaction XMP + L-glutamine + ATP + H2O = GMP + L-glutamate + AMP + diphosphate + 2 H(+). It participates in purine metabolism; GMP biosynthesis; GMP from XMP (L-Gln route): step 1/1. In terms of biological role, catalyzes the synthesis of GMP from XMP. The sequence is that of GMP synthase [glutamine-hydrolyzing] subunit A from Methanosphaera stadtmanae (strain ATCC 43021 / DSM 3091 / JCM 11832 / MCB-3).